Reading from the N-terminus, the 962-residue chain is Integrator complex subunit 7 (962 aa).

Phosphoserine is present on residues serine 338 and serine 809.

The protein belongs to the Integrator subunit 7 family. As to quaternary structure, component of the Integrator complex, composed of core subunits INTS1, INTS2, INTS3, INTS4, INTS5, INTS6, INTS7, INTS8, INTS9/RC74, INTS10, INTS11/CPSF3L, INTS12, INTS13, INTS14 and INTS15. The core complex associates with protein phosphatase 2A subunits PPP2CA and PPP2R1A, to form the Integrator-PP2A (INTAC) complex. Interacts with NABP2.

The protein localises to the nucleus. It is found in the chromosome. The protein resides in the cytoplasm. Its function is as follows. Component of the integrator complex, a multiprotein complex that terminates RNA polymerase II (Pol II) transcription in the promoter-proximal region of genes. The integrator complex provides a quality checkpoint during transcription elongation by driving premature transcription termination of transcripts that are unfavorably configured for transcriptional elongation: the complex terminates transcription by (1) catalyzing dephosphorylation of the C-terminal domain (CTD) of Pol II subunit POLR2A/RPB1 and SUPT5H/SPT5, (2) degrading the exiting nascent RNA transcript via endonuclease activity and (3) promoting the release of Pol II from bound DNA. The integrator complex is also involved in terminating the synthesis of non-coding Pol II transcripts, such as enhancer RNAs (eRNAs), small nuclear RNAs (snRNAs), telomerase RNAs and long non-coding RNAs (lncRNAs). May be not involved in the recruitment of cytoplasmic dynein to the nuclear envelope by different components of the INT complex. Plays a role in DNA damage response (DDR) signaling during the S phase. This is Integrator complex subunit 7 from Homo sapiens (Human).